The following is a 258-amino-acid chain: Global transcriptional regulator CodY (258 aa).

Residues Met-1–Leu-156 are GAF domain. Residues Ala-204 to Arg-223 constitute a DNA-binding region (H-T-H motif).

The protein belongs to the CodY family.

It is found in the cytoplasm. Functionally, DNA-binding global transcriptional regulator which is involved in the adaptive response to starvation and acts by directly or indirectly controlling the expression of numerous genes in response to nutrient availability. During rapid exponential growth, CodY is highly active and represses genes whose products allow adaptation to nutrient depletion. The polypeptide is Global transcriptional regulator CodY (Clostridium perfringens (strain SM101 / Type A)).